The primary structure comprises 86 residues: Small ribosomal subunit protein bS16 (86 aa).

This sequence belongs to the bacterial ribosomal protein bS16 family.

The polypeptide is Small ribosomal subunit protein bS16 (Bordetella avium (strain 197N)).